Here is a 668-residue protein sequence, read N- to C-terminus: tRNA 5-methylaminomethyl-2-thiouridine biosynthesis bifunctional protein MnmC (668 aa).

A tRNA (mnm(5)s(2)U34)-methyltransferase region spans residues 1 to 245 (MKHYAIQPAN…KREMLCGVME (245 aa)). The FAD-dependent cmnm(5)s(2)U34 oxidoreductase stretch occupies residues 270 to 668 (IGGGIASALL…LLKGKAVKAG (399 aa)).

In the N-terminal section; belongs to the methyltransferase superfamily. tRNA (mnm(5)s(2)U34)-methyltransferase family. This sequence in the C-terminal section; belongs to the DAO family. It depends on FAD as a cofactor.

It localises to the cytoplasm. The enzyme catalyses 5-aminomethyl-2-thiouridine(34) in tRNA + S-adenosyl-L-methionine = 5-methylaminomethyl-2-thiouridine(34) in tRNA + S-adenosyl-L-homocysteine + H(+). Functionally, catalyzes the last two steps in the biosynthesis of 5-methylaminomethyl-2-thiouridine (mnm(5)s(2)U) at the wobble position (U34) in tRNA. Catalyzes the FAD-dependent demodification of cmnm(5)s(2)U34 to nm(5)s(2)U34, followed by the transfer of a methyl group from S-adenosyl-L-methionine to nm(5)s(2)U34, to form mnm(5)s(2)U34. The chain is tRNA 5-methylaminomethyl-2-thiouridine biosynthesis bifunctional protein MnmC from Escherichia coli (strain SMS-3-5 / SECEC).